Reading from the N-terminus, the 310-residue chain is Olfactory receptor 2A4 (310 aa).

Topologically, residues 1–24 (MGDNITSIREFLLLGFPVGPRIQM) are extracellular. N4 carries N-linked (GlcNAc...) asparagine glycosylation. A helical membrane pass occupies residues 25-48 (LLFGLFSLFYVFTLLGNGTILGLI). Residues 49–56 (SLDSRLHA) are Cytoplasmic-facing. The helical transmembrane segment at 57-78 (PMYFFLSHLAVVDIAYACNTVP) threads the bilayer. Residues 79 to 99 (RMLVNLLHPAKPISFAGRMMQ) lie on the Extracellular side of the membrane. The helical transmembrane segment at 100-119 (TFLFSTFAVTECLLLVVMSY) threads the bilayer. Topologically, residues 120-138 (DLYVAICHPLRYLAIMTWR) are cytoplasmic. The helical transmembrane segment at 139–157 (VCITLAVTSWTTGVLLSLI) threads the bilayer. The Extracellular portion of the chain corresponds to 158–194 (HLVLLLPLPFCRPQKIYHFFCEILAVLKLACADTHIN). A helical membrane pass occupies residues 195–218 (ENMVLAGAISGLVGPLSTIVVSYM). Residues 219 to 235 (CILCAILQIQSREVQRK) lie on the Cytoplasmic side of the membrane. A helical transmembrane segment spans residues 236–258 (AFRTCFSHLCVIGLVYGTAIIMY). The Extracellular segment spans residues 259–271 (VGPRYGNPKEQKK). A helical membrane pass occupies residues 272-291 (YLLLFHSLFNPMLNPLICSL). The Cytoplasmic segment spans residues 292–310 (RNSEVKNTLKRVLGVERAL).

Belongs to the G-protein coupled receptor 1 family.

It is found in the cell membrane. Odorant receptor. This chain is Olfactory receptor 2A4 (OR2A4), found in Homo sapiens (Human).